We begin with the raw amino-acid sequence, 279 residues long: Oxygen-dependent coproporphyrinogen-III oxidase (279 aa).

Serine 102 contacts substrate. 2 residues coordinate a divalent metal cation: histidine 106 and histidine 116. The active-site Proton donor is histidine 116. 118-120 is a binding site for substrate; sequence NTR. Positions 149 and 179 each coordinate a divalent metal cation. Residues 244 to 279 are important for dimerization; that stretch reads YVEFNLLYDRGTKFGLMTDGNVEAILMSLPPEVKFN.

This sequence belongs to the aerobic coproporphyrinogen-III oxidase family. Homodimer. A divalent metal cation serves as cofactor.

The protein localises to the cytoplasm. It catalyses the reaction coproporphyrinogen III + O2 + 2 H(+) = protoporphyrinogen IX + 2 CO2 + 2 H2O. The protein operates within porphyrin-containing compound metabolism; protoporphyrin-IX biosynthesis; protoporphyrinogen-IX from coproporphyrinogen-III (O2 route): step 1/1. Its function is as follows. Involved in the heme biosynthesis. Catalyzes the aerobic oxidative decarboxylation of propionate groups of rings A and B of coproporphyrinogen-III to yield the vinyl groups in protoporphyrinogen-IX. The chain is Oxygen-dependent coproporphyrinogen-III oxidase from Rickettsia africae (strain ESF-5).